The chain runs to 411 residues: LIM domain-binding protein 1 (411 aa).

The residue at position 2 (S2) is an N-acetylserine. At T61 the chain carries Phosphothreonine. Residues S265 and S302 each carry the phosphoserine modification. Disordered stretches follow at residues 283–330 and 367–411; these read APPA…TFAL and DAAN…QASQ. The segment covering 302-318 has biased composition (low complexity); the sequence is SGGSTMSSGGGNTNNSN. One can recognise an LIM interaction domain (LID) domain in the interval 336 to 375; sequence DVMVVGEPTLMGGEFGDEDERLITRLENTQFDAANGIDDE.

The protein belongs to the LDB family. In terms of assembly, interacts with ESR1. Forms homodimers and heterodimers. Interacts with and activates LHX1/LIM1. Interacts with the LIM domains of ISL1 and LMO2. Can assemble in a complex with LMO2 and TAL1/SCL but does not interact with TAL1/SCL directly. Strongly interacts with the LIM2 domain of LMX1A and more weakly with the LIM1 domain. Homodimerization is not required for, and does not effect, LMX1A-binding. Component of a nuclear TAL-1 complex composed at least of CBFA2T3, LDB1, TAL1 and TCF3. Interacts with LHX6 and LHX9. At neuronal promoters, forms a complex with LHX3 involved in the specification of interneurons, in motor neurons, it is displaced by ISL1 to form a ternary complex in which ISL1 contacts both LHX3 and LDB1. Interacts with SLK; leading to negatively regulate SLK kinase activity. Interacts with YWHAZ. Interacts with PRDM1/BLIMP1. Interacts with LMO4. Interacts with RLIM/RNF12; the interaction inhibits the ubiquitination of LMO proteins. Ubiquitinated by RLIM/RNF12, leading to its degradation by the proteasome. As to expression, expressed in a wide range of adult tissues including brain, heart, skeletal muscle, colon, thymus, spleen, kidney, liver, small intestine, lung and peripheral blood leukocytes.

It is found in the nucleus. Functionally, binds to the LIM domain of a wide variety of LIM domain-containing transcription factors. May regulate the transcriptional activity of LIM-containing proteins by determining specific partner interactions. Plays a role in the development of interneurons and motor neurons in cooperation with LHX3 and ISL1. Acts synergistically with LHX1/LIM1 in axis formation and activation of gene expression. Acts with LMO2 in the regulation of red blood cell development, maintaining erythroid precursors in an immature state. This is LIM domain-binding protein 1 (LDB1) from Homo sapiens (Human).